Reading from the N-terminus, the 1031-residue chain is LRR receptor-like serine/threonine-protein kinase EFR (1031 aa).

A signal peptide spans 1 to 24 (MKLSFSLVFNALTLLLQVCIFAQA). Topologically, residues 25 to 653 (RFSNETDMQA…LSVRKKVVSG (629 aa)) are extracellular. N-linked (GlcNAc...) asparagine glycans are attached at residues Asn-28, Asn-55, and Asn-95. LRR repeat units lie at residues 98–120 (FLRL…VGRL), 122–144 (RLQY…LSNC), 146–168 (RLST…LGSL), 170–193 (KLAI…GNLT), 194–216 (SLQK…VARL), 218–240 (QMVF…LYNI), 242–264 (SLES…FGYL), 267–289 (NLRR…LANI), 291–312 (SLER…SFGK), and 315–335 (NLWW…SGLE). Residues Asn-127 and Asn-143 are each glycosylated (N-linked (GlcNAc...) asparagine). N-linked (GlcNAc...) asparagine glycosylation is found at Asn-180 and Asn-191. N-linked (GlcNAc...) asparagine glycosylation occurs at Asn-239. A glycan (N-linked (GlcNAc...) asparagine) is linked at Asn-288. N-linked (GlcNAc...) asparagine glycans are attached at residues Asn-323, Asn-329, Asn-342, and Asn-366. 11 LRR repeats span residues 345–368 (QLEY…ANLS), 370–392 (TLTS…IGNL), 394–416 (SLQE…FGKL), 418–440 (NLQV…FGNM), 442–464 (RLQK…LGRC), 466–487 (YLLD…EILQ), 490–512 (SLAY…VGKL), 514–536 (LLVG…IGGC), 538–560 (SMEF…SRLV), 561–584 (SLKN…ASLP), and 585–597 (SLRN…NKFE). N-linked (GlcNAc...) asparagine glycosylation occurs at Asn-439. N-linked (GlcNAc...) asparagine glycosylation is present at Asn-478. 3 N-linked (GlcNAc...) asparagine glycosylation sites follow: Asn-571, Asn-590, and Asn-608. A helical transmembrane segment spans residues 654–674 (ICIGIASLLLIIIVASLCWFM). Topologically, residues 675 to 1031 (KRKKKNNASD…WMLNTDMHTM (357 aa)) are cytoplasmic. A Phosphothreonine modification is found at Thr-709. The Protein kinase domain occupies 712 to 1001 (FSSTNLIGSG…ELISIRSKFF (290 aa)). Residues 718-726 (IGSGNFGNV) and Lys-741 each bind ATP. 2 positions are modified to phosphotyrosine: Tyr-791 and Tyr-836. The active-site Proton acceptor is Asp-849. Tyr-897 is subject to Phosphotyrosine. Residues 1005–1020 (TTITESPRDAPQSSPQ) are compositionally biased toward polar residues. Positions 1005 to 1031 (TTITESPRDAPQSSPQEWMLNTDMHTM) are disordered.

Belongs to the protein kinase superfamily. Ser/Thr protein kinase family. As to quaternary structure, binds to Pseudomonas syringae AvrPto1 and (via the kinase and cytoplasmic domains) to hopD2. Interacts with SERK3/BAK1, SERK4/BKK1, SERK1 and SERK2 in a specific ligand-induced manner. Binds to IOS1. Binds to BIK1 in the absence of pathogen elicitor; dissociates upon pathogen-associated molecular pattern (PAMP)-triggered activation. Autophosphorylated after elicitation with elfl18. Autophosphorylation is inhibited by the binding with avrPto1. Phosphorylation at T-836 is required for immune signaling. Post-translationally, polyubiquitinated at the kinase domain mediated by P.syringae AvrPtoB.

It is found in the cell membrane. Its subcellular location is the endomembrane system. The enzyme catalyses L-seryl-[protein] + ATP = O-phospho-L-seryl-[protein] + ADP + H(+). The catalysed reaction is L-threonyl-[protein] + ATP = O-phospho-L-threonyl-[protein] + ADP + H(+). Constitutes the pattern-recognition receptor (PPR) that determines the specific perception of elongation factor Tu (EF-Tu), a potent elicitor of the defense response to pathogen-associated molecular patterns (PAMPs); phosphorylates BIK1 upon elicitation to regulate immune responses such as defense hormone expression (e.g. jasmonic acid (JA) and salicylic acid (SA)). Reduces transformation by Rhizobium radiobacter probably by inducing plant defense during the interaction. Binding to the effector AvrPto1 from P.syringae blocks the downstream plant immune response while interaction with hopD2 decreases the phosphorylation level of EFR upon elf18 treatment. Specific endoplasmic reticulum quality control components (ERD2B, CRT3, UGGT and STT3A) are required for the biogenesis of EFR. The protein is LRR receptor-like serine/threonine-protein kinase EFR of Arabidopsis thaliana (Mouse-ear cress).